A 228-amino-acid polypeptide reads, in one-letter code: A-type ATP synthase subunit D (228 aa).

Basic and acidic residues predominate over residues 205 to 214 (KKEEEEKAEA). Residues 205–228 (KKEEEEKAEAAAEAAAVEDPEPAD) form a disordered region.

It belongs to the V-ATPase D subunit family. As to quaternary structure, has multiple subunits with at least A(3), B(3), C, D, E, F, H, I and proteolipid K(x).

The protein resides in the cell membrane. Its function is as follows. Component of the A-type ATP synthase that produces ATP from ADP in the presence of a proton gradient across the membrane. This is A-type ATP synthase subunit D from Halorubrum lacusprofundi (strain ATCC 49239 / DSM 5036 / JCM 8891 / ACAM 34).